We begin with the raw amino-acid sequence, 150 residues long: Copper transporter 3 (150 aa).

Helical transmembrane passes span 50–70 and 100–120; these read GGMYALALAAVFALAVLLEFL and LAYLLMLALMSFNVGVLLAAV.

The protein belongs to the copper transporter (Ctr) (TC 1.A.56) family. SLC31A subfamily.

It localises to the membrane. Functionally, involved in the transport of copper. The sequence is that of Copper transporter 3 (COPT3) from Oryza sativa subsp. japonica (Rice).